Here is an 89-residue protein sequence, read N- to C-terminus: Extender of the chronological lifespan protein ecl3 (89 aa).

The protein belongs to the ecl1 family.

It localises to the nucleus. In terms of biological role, involved in chronological cell aging. The sequence is that of Extender of the chronological lifespan protein ecl3 (ecl3) from Schizosaccharomyces pombe (strain 972 / ATCC 24843) (Fission yeast).